The following is a 290-amino-acid chain: Light-independent protochlorophyllide reductase iron-sulfur ATP-binding protein (290 aa).

ATP is bound by residues 10–15 (GIGKST) and Lys-39. Mg(2+) is bound at residue Ser-14. 2 residues coordinate [4Fe-4S] cluster: Cys-95 and Cys-129. 180 to 181 (NR) is an ATP binding site.

The protein belongs to the NifH/BchL/ChlL family. In terms of assembly, homodimer. Protochlorophyllide reductase is composed of three subunits; ChlL, ChlN and ChlB. [4Fe-4S] cluster serves as cofactor.

The protein localises to the plastid. It is found in the chloroplast. The enzyme catalyses chlorophyllide a + oxidized 2[4Fe-4S]-[ferredoxin] + 2 ADP + 2 phosphate = protochlorophyllide a + reduced 2[4Fe-4S]-[ferredoxin] + 2 ATP + 2 H2O. The protein operates within porphyrin-containing compound metabolism; chlorophyll biosynthesis (light-independent). Component of the dark-operative protochlorophyllide reductase (DPOR) that uses Mg-ATP and reduced ferredoxin to reduce ring D of protochlorophyllide (Pchlide) to form chlorophyllide a (Chlide). This reaction is light-independent. The L component serves as a unique electron donor to the NB-component of the complex, and binds Mg-ATP. In Pyropia yezoensis (Susabi-nori), this protein is Light-independent protochlorophyllide reductase iron-sulfur ATP-binding protein.